The primary structure comprises 330 residues: MEFYASLKSIAMHVPSERVKNAEFQQFLDTSDEWIEKRTGIKERRFASNEEKSSDLGVIAAKQAIERAHLTPKDIDLVVVATLSPDFLAMPSTACVLSAKLGIENKPAFDISAACTGFIYLLSVAKAYVESGMCENVLIVGAEKTSSVLDFKDRGTCILFGDGAGACVIGRTKRLKESILDVQISANGNFSNYLYTPRTLKPTPFNAKEEALEPFLCMKGNEVFKLAVKTLLKDVEMILEKNALKPEDVRLFIPHQANFRIIQAVREHLDFKDEQVVLTVHKYGNTSAASIPMAMGEAYEEGRLKKGDLMLLDAFGGGLTWGSALVYFGG.

Residues C115 and H255 contribute to the active site. The interval Q256–R260 is ACP-binding. The active site involves N285.

The protein belongs to the thiolase-like superfamily. FabH family. As to quaternary structure, homodimer.

Its subcellular location is the cytoplasm. It catalyses the reaction malonyl-[ACP] + acetyl-CoA + H(+) = 3-oxobutanoyl-[ACP] + CO2 + CoA. It participates in lipid metabolism; fatty acid biosynthesis. Functionally, catalyzes the condensation reaction of fatty acid synthesis by the addition to an acyl acceptor of two carbons from malonyl-ACP. Catalyzes the first condensation reaction which initiates fatty acid synthesis and may therefore play a role in governing the total rate of fatty acid production. Possesses both acetoacetyl-ACP synthase and acetyl transacylase activities. Its substrate specificity determines the biosynthesis of branched-chain and/or straight-chain of fatty acids. The sequence is that of Beta-ketoacyl-[acyl-carrier-protein] synthase III from Helicobacter pylori (strain G27).